The sequence spans 304 residues: tRNA dimethylallyltransferase (304 aa).

Residue 9 to 16 (APTAAGKS) coordinates ATP. Residue 11–16 (TAAGKS) participates in substrate binding.

The protein belongs to the IPP transferase family. In terms of assembly, monomer. It depends on Mg(2+) as a cofactor.

The enzyme catalyses adenosine(37) in tRNA + dimethylallyl diphosphate = N(6)-dimethylallyladenosine(37) in tRNA + diphosphate. In terms of biological role, catalyzes the transfer of a dimethylallyl group onto the adenine at position 37 in tRNAs that read codons beginning with uridine, leading to the formation of N6-(dimethylallyl)adenosine (i(6)A). This Deinococcus geothermalis (strain DSM 11300 / CIP 105573 / AG-3a) protein is tRNA dimethylallyltransferase.